Consider the following 269-residue polypeptide: Tryptophan synthase alpha chain (269 aa).

Active-site proton acceptor residues include Glu-49 and Asp-60.

It belongs to the TrpA family. As to quaternary structure, tetramer of two alpha and two beta chains.

The enzyme catalyses (1S,2R)-1-C-(indol-3-yl)glycerol 3-phosphate + L-serine = D-glyceraldehyde 3-phosphate + L-tryptophan + H2O. It functions in the pathway amino-acid biosynthesis; L-tryptophan biosynthesis; L-tryptophan from chorismate: step 5/5. Its function is as follows. The alpha subunit is responsible for the aldol cleavage of indoleglycerol phosphate to indole and glyceraldehyde 3-phosphate. This is Tryptophan synthase alpha chain from Pseudomonas entomophila (strain L48).